The primary structure comprises 348 residues: Transmembrane protease serine 12 (348 aa).

The signal sequence occupies residues Met-1–Ser-20. Residues Asp-21–Gly-324 are Extracellular-facing. The disordered stretch occupies residues Ser-24 to Ala-46. Positions Ile-78–Phe-318 constitute a Peptidase S1 domain. An intrachain disulfide couples Cys-107 to Cys-123. Active-site charge relay system residues include His-122 and Asp-171. Disulfide bonds link Cys-206-Cys-274, Cys-237-Cys-253, and Cys-264-Cys-294. Asn-219 and Asn-249 each carry an N-linked (GlcNAc...) asparagine glycan. Ser-268 acts as the Charge relay system in catalysis. A helical transmembrane segment spans residues Ile-325–Leu-345. At Ala-346–Thr-348 the chain is on the cytoplasmic side.

The protein belongs to the peptidase S1 family. In testis, expressed in spermatocytes and spermatids (at protein level).

It localises to the cell membrane. The protein localises to the cytoplasmic vesicle. Its subcellular location is the secretory vesicle. It is found in the acrosome. Functionally, required for male fertility. Plays a critical role in sperm capacitation and acrosome reactions during fertilization, and also plays a role in the regulation of proteins involved in spermatogenesis. Regulates protein pathways that promote chromosomal synapsis formation, double-strand break repair, formation of the inner mitochondrial membrane cristae and apoptosis in developing sperm. Required for normal sperm motility and binding to the zona pellucida, potentially via a role in ADAM3 protein maturation. The sequence is that of Transmembrane protease serine 12 from Homo sapiens (Human).